A 360-amino-acid chain; its full sequence is Peptide chain release factor 1 (360 aa).

Residue Gln235 is modified to N5-methylglutamine. Residues 281–307 (ERQRADSERSADRRSQVGSGDRSERIR) show a composition bias toward basic and acidic residues. The tract at residues 281-311 (ERQRADSERSADRRSQVGSGDRSERIRTYNF) is disordered.

It belongs to the prokaryotic/mitochondrial release factor family. In terms of processing, methylated by PrmC. Methylation increases the termination efficiency of RF1.

The protein localises to the cytoplasm. Functionally, peptide chain release factor 1 directs the termination of translation in response to the peptide chain termination codons UAG and UAA. This Rhizobium meliloti (strain 1021) (Ensifer meliloti) protein is Peptide chain release factor 1.